The chain runs to 563 residues: Light-independent protochlorophyllide reductase subunit B (563 aa).

Asp36 contacts [4Fe-4S] cluster. The Proton donor role is filled by Asp349. Residue Gly484–Met485 participates in substrate binding.

This sequence belongs to the ChlB/BchB/BchZ family. In terms of assembly, protochlorophyllide reductase is composed of three subunits; ChlL, ChlN and ChlB. Forms a heterotetramer of two ChlB and two ChlN subunits. It depends on [4Fe-4S] cluster as a cofactor.

The protein resides in the plastid. It is found in the chloroplast. The catalysed reaction is chlorophyllide a + oxidized 2[4Fe-4S]-[ferredoxin] + 2 ADP + 2 phosphate = protochlorophyllide a + reduced 2[4Fe-4S]-[ferredoxin] + 2 ATP + 2 H2O. The protein operates within porphyrin-containing compound metabolism; chlorophyll biosynthesis (light-independent). Functionally, component of the dark-operative protochlorophyllide reductase (DPOR) that uses Mg-ATP and reduced ferredoxin to reduce ring D of protochlorophyllide (Pchlide) to form chlorophyllide a (Chlide). This reaction is light-independent. The NB-protein (ChlN-ChlB) is the catalytic component of the complex. This is Light-independent protochlorophyllide reductase subunit B from Chlamydomonas moewusii (Chlamydomonas eugametos).